The sequence spans 245 residues: Suppressor of aph-1 (245 aa).

The region spanning 12–60 is the GYF domain; it reads DTKWHYLGPDSEKYGPYMSKDMLFWLQAGYFNDGLQLKTENEPNYHTLG. The segment at 126–166 is disordered; sequence NQNGPPMGAQMHSQPPSEPIDAGSLSHTPDSENETRLNEQT.

Involved in negative regulation of early and late embryonic Notch signaling. This Caenorhabditis elegans protein is Suppressor of aph-1.